The sequence spans 244 residues: 1-(5-phosphoribosyl)-5-[(5-phosphoribosylamino)methylideneamino] imidazole-4-carboxamide isomerase (244 aa).

The active-site Proton acceptor is the Asp10. Asp132 (proton donor) is an active-site residue.

It belongs to the HisA/HisF family.

The protein localises to the cytoplasm. It catalyses the reaction 1-(5-phospho-beta-D-ribosyl)-5-[(5-phospho-beta-D-ribosylamino)methylideneamino]imidazole-4-carboxamide = 5-[(5-phospho-1-deoxy-D-ribulos-1-ylimino)methylamino]-1-(5-phospho-beta-D-ribosyl)imidazole-4-carboxamide. Its pathway is amino-acid biosynthesis; L-histidine biosynthesis; L-histidine from 5-phospho-alpha-D-ribose 1-diphosphate: step 4/9. The sequence is that of 1-(5-phosphoribosyl)-5-[(5-phosphoribosylamino)methylideneamino] imidazole-4-carboxamide isomerase from Xanthomonas oryzae pv. oryzae (strain MAFF 311018).